A 564-amino-acid chain; its full sequence is Phenylalanine--tRNA ligase beta subunit (564 aa).

One can recognise a B5 domain in the interval 286–362 (YFQNTLEVSV…IGRGLDSFKP (77 aa)). Residues Asp340, Asp346, Glu349, and Glu350 each contribute to the Mg(2+) site.

This sequence belongs to the phenylalanyl-tRNA synthetase beta subunit family. Type 2 subfamily. In terms of assembly, tetramer of two alpha and two beta subunits. Mg(2+) serves as cofactor.

It is found in the cytoplasm. The enzyme catalyses tRNA(Phe) + L-phenylalanine + ATP = L-phenylalanyl-tRNA(Phe) + AMP + diphosphate + H(+). This Borrelia hermsii (strain HS1 / DAH) protein is Phenylalanine--tRNA ligase beta subunit.